The following is a 1480-amino-acid chain: Cystic fibrosis transmembrane conductance regulator (1480 aa).

The Cytoplasmic segment spans residues 1–77 (MQRSPLEKAS…KLINALRRCF (77 aa)). Residues 78–98 (FWRFMFYGILLYLGEVTKAVQ) traverse the membrane as a helical segment. In terms of domain architecture, ABC transmembrane type-1 1 spans 81–365 (FMFYGILLYL…WAVQTWYDSL (285 aa)). The Extracellular portion of the chain corresponds to 99–122 (PLLLGRIIASYDPDNKTERSIAIY). The chain crosses the membrane as a helical span at residues 123–146 (LGIGLCLLFIVRTLLLHPAIFGLH). Residues 147-195 (HIGMQMRIAMFSLIYKKTLKLSSRVLDKISIGQLVSLLSNNLNKFDEGL) are Cytoplasmic-facing. Residues 196 to 216 (ALAHFVWIAPLQVALLMGLIW) traverse the membrane as a helical segment. At 217 to 222 (ELLQAS) the chain is on the extracellular side. A helical transmembrane segment spans residues 223 to 243 (AFCGLGFLIVLALFQAGLGRM). Residues 244 to 298 (MMKYRDQRAGKINERLVITSEMIENIQSVKAYCWEEAMEKMIENLRQTELKLTRK) are Cytoplasmic-facing. A helical membrane pass occupies residues 299–319 (AAYVRYFNSSAFFFSGFFVVF). Over 320-339 (LSVLPYALIKGIVLRKIFTT) the chain is Extracellular. Residues 340–358 (ISFCIVLRMAVTRQFPWAV) traverse the membrane as a helical segment. The Cytoplasmic portion of the chain corresponds to 359 to 858 (QTWYDSLGAI…YLRYITLHKS (500 aa)). ATP-binding positions include tryptophan 401, serine 434, 458–465 (GSTGAGKT), and glutamine 493. Residues 423–646 (NGDDNLFFSN…RPDFSSKLMG (224 aa)) enclose the ABC transporter 1 domain. The S-palmitoyl cysteine moiety is linked to residue cysteine 524. 2 positions are modified to phosphoserine: serine 549 and serine 660. A disordered R region region spans residues 654 to 831 (SSERRNSILT…EEINEEDLKE (178 aa)). Residue serine 670 is modified to Phosphoserine; by PKA. Serine 686 is modified (phosphoserine). Lysine 688 is covalently cross-linked (Glycyl lysine isopeptide (Lys-Gly) (interchain with G-Cter in ubiquitin)). Residues serine 700 and serine 712 each carry the phosphoserine modification. Threonine 717 bears the Phosphothreonine mark. A phosphoserine mark is found at serine 737, serine 753, serine 768, serine 790, serine 795, and serine 813. Residues 859 to 879 (LIFVLIWCLVIFLAEVAASLV) form a helical membrane-spanning segment. One can recognise an ABC transmembrane type-1 2 domain in the interval 859 to 1155 (LIFVLIWCLV…AVNSSIDVDS (297 aa)). At 880-918 (VLWFLGNTPFQDKGNSTYSRNNSYAVIITNTSSYYVFYI) the chain is on the extracellular side. Asparagine 894, asparagine 900, and asparagine 909 each carry an N-linked (GlcNAc...) asparagine glycan. Residues 919–939 (YVGVADTLLALGFFRGLPLVH) form a discontinuously helical membrane-spanning segment. Residues 940-990 (TLITVSKILHHKMLHSVLQAPMSTLNTLKAGGILNRFSKDIAILDDLLPLT) lie on the Cytoplasmic side of the membrane. A helical transmembrane segment spans residues 991-1011 (IFDFIQLLLIVIGAIAVVSVL). At 1012-1013 (QP) the chain is on the extracellular side. The chain crosses the membrane as a helical span at residues 1014–1034 (YILLATVPVIAAFILLRAYFL). Residues 1035-1095 (QTSQQLKQLE…TANWFLYLAT (61 aa)) are Cytoplasmic-facing. Residues 1096-1116 (LRWFQMRIEIIFVIFFIAVTF) traverse the membrane as a helical segment. Residues 1117-1130 (ISILTTGEGEGTVG) are Extracellular-facing. The chain crosses the membrane as a helical span at residues 1131-1151 (IILTLAMNIMSTLQWAVNSSI). At 1152-1480 (DVDSLMRSVS…TEEEVQETRL (329 aa)) the chain is on the cytoplasmic side. Residues 1210-1443 (MTIKDLTAKY…KSLFQQAISH (234 aa)) form the ABC transporter 2 domain. ATP-binding positions include tyrosine 1219 and 1244-1251 (GRTGSGKS). The tract at residues 1386 to 1480 (RALKQAFADC…TEEEVQETRL (95 aa)) is interaction with GORASP2. Cysteine 1395 carries the S-palmitoyl cysteine lipid modification. Residues serine 1444 and serine 1456 each carry the phosphoserine modification. A disordered region spans residues 1452 to 1480 (HRNSSKYKSPPQIASLKEETEEEVQETRL). The segment covering 1470 to 1480 (ETEEEVQETRL) has biased composition (acidic residues). A PDZ-binding motif is present at residues 1478-1480 (TRL).

The protein belongs to the ABC transporter superfamily. ABCC family. CFTR transporter (TC 3.A.1.202) subfamily. As to quaternary structure, monomer; does not require oligomerization for channel activity. May form oligomers in the membrane. Interacts with SLC26A3, SLC26A6 and NHERF1. Interacts with SHANK2. Interacts with MYO6. Interacts (via C-terminus) with GOPC (via PDZ domain); this promotes CFTR internalization and thereby decreases channel activity. Interacts with SLC4A7 through NHERF1. Found in a complex with MYO5B and RAB11A. Interacts with ANO1. Interacts with SLC26A8. Interacts with AHCYL1; the interaction increases CFTR activity. Interacts with CSE1L. The core-glycosylated form interacts with GORASP2 (via PDZ GRASP-type 1 domain) in respone to ER stress. Interacts with MARCHF2; the interaction leads to CFTR ubiqtuitination and degradation. Interacts with ADGRG2. N-glycosylated. In terms of processing, phosphorylated; cAMP treatment promotes phosphorylation and activates the channel. Dephosphorylation decreases the ATPase activity (in vitro). Phosphorylation at PKA sites activates the channel. Phosphorylation at PKC sites enhances the response to phosphorylation by PKA. Phosphorylated by AMPK; this inhibits channel activity. Post-translationally, ubiquitinated, leading to its degradation in the lysosome. Deubiquitination by USP10 in early endosomes enhances its endocytic recycling to the cell membrane. Ubiquitinated by RNF185 during ER stress. Ubiquitinated by MARCHF2.

The protein resides in the apical cell membrane. Its subcellular location is the early endosome membrane. It is found in the cell membrane. The protein localises to the recycling endosome membrane. It localises to the endoplasmic reticulum membrane. The protein resides in the nucleus. It carries out the reaction ATP + H2O + closed Cl(-) channel = ADP + phosphate + open Cl(-) channel.. It catalyses the reaction chloride(in) = chloride(out). The catalysed reaction is hydrogencarbonate(in) = hydrogencarbonate(out). The enzyme catalyses ATP + H2O = ADP + phosphate + H(+). Its function is as follows. Epithelial ion channel that plays an important role in the regulation of epithelial ion and water transport and fluid homeostasis. Mediates the transport of chloride ions across the cell membrane. Possesses an intrinsic ATPase activity and utilizes ATP to gate its channel; the passive flow of anions through the channel is gated by cycles of ATP binding and hydrolysis by the ATP-binding domains. The ion channel is also permeable to HCO(3)(-); selectivity depends on the extracellular chloride concentration. Exerts its function also by modulating the activity of other ion channels and transporters. Contributes to the regulation of the pH and the ion content of the epithelial fluid layer. Modulates the activity of the epithelial sodium channel (ENaC) complex, in part by regulating the cell surface expression of the ENaC complex. May regulate bicarbonate secretion and salvage in epithelial cells by regulating the transporter SLC4A7. Can inhibit the chloride channel activity of ANO1. Plays a role in the chloride and bicarbonate homeostasis during sperm epididymal maturation and capacitation. The chain is Cystic fibrosis transmembrane conductance regulator from Ateles geoffroyi (Black-handed spider monkey).